Consider the following 207-residue polypeptide: Ribonuclease HII (207 aa).

The RNase H type-2 domain maps to T18 to S207. Residues D24, E25, and D116 each coordinate a divalent metal cation.

This sequence belongs to the RNase HII family. Mn(2+) is required as a cofactor. It depends on Mg(2+) as a cofactor.

The protein localises to the cytoplasm. It carries out the reaction Endonucleolytic cleavage to 5'-phosphomonoester.. Endonuclease that specifically degrades the RNA of RNA-DNA hybrids. The protein is Ribonuclease HII of Mycoplasma capricolum subsp. capricolum (strain California kid / ATCC 27343 / NCTC 10154).